The primary structure comprises 435 residues: Putative magnesium transporter MRS2-H (435 aa).

Residues 19–54 (FSSSPESRRCRSVHRVPSRPRPPLAPPARVMGKGNS) are disordered. Transmembrane regions (helical) follow at residues 369 to 389 (LTLIIASFGIAINTFIAAAFA) and 408 to 428 (FVGATSFLCMSIVILLFTYAW).

The protein belongs to the CorA metal ion transporter (MIT) (TC 1.A.35.5) family.

It localises to the membrane. In terms of biological role, putative magnesium transporter. The protein is Putative magnesium transporter MRS2-H (MRS2-H) of Oryza sativa subsp. indica (Rice).